The primary structure comprises 127 residues: Ycf91-like protein (127 aa).

The protein belongs to the ycf91 family.

The polypeptide is Ycf91-like protein (Nostoc sp. (strain PCC 7120 / SAG 25.82 / UTEX 2576)).